Here is a 143-residue protein sequence, read N- to C-terminus: Ribonuclease H (143 aa).

In terms of domain architecture, RNase H type-1 spans 1–141; the sequence is MKHVEIFTDG…VDKLASDAAL (141 aa). 4 residues coordinate Mg(2+): D9, E47, D69, and D133.

This sequence belongs to the RNase H family. In terms of assembly, monomer. Mg(2+) serves as cofactor.

It is found in the cytoplasm. The enzyme catalyses Endonucleolytic cleavage to 5'-phosphomonoester.. In terms of biological role, endonuclease that specifically degrades the RNA of RNA-DNA hybrids. This chain is Ribonuclease H, found in Novosphingobium aromaticivorans (strain ATCC 700278 / DSM 12444 / CCUG 56034 / CIP 105152 / NBRC 16084 / F199).